The chain runs to 510 residues: GMP synthase [glutamine-hydrolyzing] (510 aa).

Residues 5–195 (LVLILDFGGQ…LYEVCHCQGD (191 aa)) form the Glutamine amidotransferase type-1 domain. Cys82 (nucleophile) is an active-site residue. Catalysis depends on residues His169 and Glu171. Residues 196–385 (WTMENYIEKE…LGVPEEIVWR (190 aa)) form the GMPS ATP-PPase domain. Residue 223 to 229 (SGGVDSS) coordinates ATP.

In terms of assembly, homodimer.

The catalysed reaction is XMP + L-glutamine + ATP + H2O = GMP + L-glutamate + AMP + diphosphate + 2 H(+). It functions in the pathway purine metabolism; GMP biosynthesis; GMP from XMP (L-Gln route): step 1/1. Functionally, catalyzes the synthesis of GMP from XMP. This chain is GMP synthase [glutamine-hydrolyzing], found in Alkaliphilus metalliredigens (strain QYMF).